A 340-amino-acid polypeptide reads, in one-letter code: Glycerol-3-phosphate dehydrogenase [NAD(P)+] (340 aa).

Residues Ser-14, Phe-15, Arg-35, and Lys-108 each coordinate NADPH. 2 residues coordinate sn-glycerol 3-phosphate: Lys-108 and Gly-136. Ala-140 is an NADPH binding site. Sn-glycerol 3-phosphate-binding residues include Lys-191, Asp-244, Ser-254, Arg-255, and Asn-256. Lys-191 (proton acceptor) is an active-site residue. Arg-255 serves as a coordination point for NADPH. Glu-281 serves as a coordination point for NADPH.

The protein belongs to the NAD-dependent glycerol-3-phosphate dehydrogenase family.

Its subcellular location is the cytoplasm. The catalysed reaction is sn-glycerol 3-phosphate + NAD(+) = dihydroxyacetone phosphate + NADH + H(+). The enzyme catalyses sn-glycerol 3-phosphate + NADP(+) = dihydroxyacetone phosphate + NADPH + H(+). It functions in the pathway membrane lipid metabolism; glycerophospholipid metabolism. Functionally, catalyzes the reduction of the glycolytic intermediate dihydroxyacetone phosphate (DHAP) to sn-glycerol 3-phosphate (G3P), the key precursor for phospholipid synthesis. In Pseudomonas aeruginosa (strain ATCC 15692 / DSM 22644 / CIP 104116 / JCM 14847 / LMG 12228 / 1C / PRS 101 / PAO1), this protein is Glycerol-3-phosphate dehydrogenase [NAD(P)+].